A 701-amino-acid polypeptide reads, in one-letter code: Elongation factor G (701 aa).

In terms of domain architecture, tr-type G spans 8–286 (ERIRNIGIIA…AVVYYLPSPV (279 aa)). GTP is bound by residues 17–24 (AHIDAGKT), 85–89 (DTPGH), and 139–142 (NKMD).

This sequence belongs to the TRAFAC class translation factor GTPase superfamily. Classic translation factor GTPase family. EF-G/EF-2 subfamily.

It is found in the cytoplasm. Its function is as follows. Catalyzes the GTP-dependent ribosomal translocation step during translation elongation. During this step, the ribosome changes from the pre-translocational (PRE) to the post-translocational (POST) state as the newly formed A-site-bound peptidyl-tRNA and P-site-bound deacylated tRNA move to the P and E sites, respectively. Catalyzes the coordinated movement of the two tRNA molecules, the mRNA and conformational changes in the ribosome. The chain is Elongation factor G from Roseiflexus castenholzii (strain DSM 13941 / HLO8).